The following is a 311-amino-acid chain: Probable manganese-dependent inorganic pyrophosphatase (311 aa).

Mn(2+)-binding residues include His-9, Asp-13, Asp-15, Asp-75, His-97, and Asp-149.

Belongs to the PPase class C family. It depends on Mn(2+) as a cofactor.

It localises to the cytoplasm. The catalysed reaction is diphosphate + H2O = 2 phosphate + H(+). The sequence is that of Probable manganese-dependent inorganic pyrophosphatase from Shouchella clausii (strain KSM-K16) (Alkalihalobacillus clausii).